Reading from the N-terminus, the 220-residue chain is Ribosomal RNA small subunit methyltransferase G (220 aa).

S-adenosyl-L-methionine contacts are provided by residues G78, F83, 129–130 (GE), and R146.

It belongs to the methyltransferase superfamily. RNA methyltransferase RsmG family.

It is found in the cytoplasm. It catalyses the reaction guanosine(527) in 16S rRNA + S-adenosyl-L-methionine = N(7)-methylguanosine(527) in 16S rRNA + S-adenosyl-L-homocysteine. Its function is as follows. Specifically methylates the N7 position of guanine in position 527 of 16S rRNA. The chain is Ribosomal RNA small subunit methyltransferase G from Geobacter metallireducens (strain ATCC 53774 / DSM 7210 / GS-15).